Consider the following 146-residue polypeptide: Protein US8.5 (146 aa).

Residues 63-93 (LIAIADARGDPPETLPPGAGGAAPACRRPPR) form a disordered region. Positions 84–93 (AAPACRRPPR) are enriched in low complexity.

Belongs to the HHV-1 US8.5 protein family. In terms of processing, phosphorylated.

Its subcellular location is the host nucleus. The protein localises to the host nucleolus. The protein is Protein US8.5 of Human herpesvirus 2 (strain HG52) (HHV-2).